The primary structure comprises 364 residues: Flagellar P-ring protein (364 aa).

The first 21 residues, methionine 1 to alanine 21, serve as a signal peptide directing secretion.

It belongs to the FlgI family. The basal body constitutes a major portion of the flagellar organelle and consists of four rings (L,P,S, and M) mounted on a central rod.

The protein localises to the periplasm. The protein resides in the bacterial flagellum basal body. Functionally, assembles around the rod to form the L-ring and probably protects the motor/basal body from shearing forces during rotation. The chain is Flagellar P-ring protein from Pseudoalteromonas translucida (strain TAC 125).